The following is a 211-amino-acid chain: Uracil phosphoribosyltransferase (211 aa).

Residues arginine 78, arginine 103, and 130–138 (DPMLATGGT) each bind 5-phospho-alpha-D-ribose 1-diphosphate. Uracil-binding positions include isoleucine 195 and 200 to 202 (GDA). Aspartate 201 contributes to the 5-phospho-alpha-D-ribose 1-diphosphate binding site.

The protein belongs to the UPRTase family. It depends on Mg(2+) as a cofactor.

The enzyme catalyses UMP + diphosphate = 5-phospho-alpha-D-ribose 1-diphosphate + uracil. It participates in pyrimidine metabolism; UMP biosynthesis via salvage pathway; UMP from uracil: step 1/1. Its activity is regulated as follows. Allosterically activated by GTP. Functionally, catalyzes the conversion of uracil and 5-phospho-alpha-D-ribose 1-diphosphate (PRPP) to UMP and diphosphate. The sequence is that of Uracil phosphoribosyltransferase from Kocuria rhizophila (strain ATCC 9341 / DSM 348 / NBRC 103217 / DC2201).